We begin with the raw amino-acid sequence, 428 residues long: Histidine--tRNA ligase (428 aa).

The protein belongs to the class-II aminoacyl-tRNA synthetase family. In terms of assembly, homodimer.

The protein resides in the cytoplasm. It carries out the reaction tRNA(His) + L-histidine + ATP = L-histidyl-tRNA(His) + AMP + diphosphate + H(+). The chain is Histidine--tRNA ligase from Chlamydia trachomatis serovar L2 (strain ATCC VR-902B / DSM 19102 / 434/Bu).